The primary structure comprises 404 residues: Glucose-1-phosphate adenylyltransferase (404 aa).

Alpha-D-glucose 1-phosphate-binding positions include Y99, G164, 179 to 180 (EK), and S197.

Belongs to the bacterial/plant glucose-1-phosphate adenylyltransferase family.

It carries out the reaction alpha-D-glucose 1-phosphate + ATP + H(+) = ADP-alpha-D-glucose + diphosphate. The protein operates within glycan biosynthesis; glycogen biosynthesis. Functionally, involved in the biosynthesis of ADP-glucose, a building block, required in the biosynthesis of maltose-1-phosphate (M1P) and in the elongation reactions to produce linear alpha-1,4-glucans. Catalyzes the reaction between ATP and alpha-D-glucose 1-phosphate (G1P) to produce pyrophosphate and ADP-Glc. The polypeptide is Glucose-1-phosphate adenylyltransferase (Mycolicibacterium vanbaalenii (strain DSM 7251 / JCM 13017 / BCRC 16820 / KCTC 9966 / NRRL B-24157 / PYR-1) (Mycobacterium vanbaalenii)).